We begin with the raw amino-acid sequence, 235 residues long: Enolase-phosphatase E1 (235 aa).

It belongs to the HAD-like hydrolase superfamily. MasA/MtnC family. Monomer. Mg(2+) is required as a cofactor.

The catalysed reaction is 5-methylsulfanyl-2,3-dioxopentyl phosphate + H2O = 1,2-dihydroxy-5-(methylsulfanyl)pent-1-en-3-one + phosphate. It functions in the pathway amino-acid biosynthesis; L-methionine biosynthesis via salvage pathway; L-methionine from S-methyl-5-thio-alpha-D-ribose 1-phosphate: step 3/6. The protein operates within amino-acid biosynthesis; L-methionine biosynthesis via salvage pathway; L-methionine from S-methyl-5-thio-alpha-D-ribose 1-phosphate: step 4/6. Bifunctional enzyme that catalyzes the enolization of 2,3-diketo-5-methylthiopentyl-1-phosphate (DK-MTP-1-P) into the intermediate 2-hydroxy-3-keto-5-methylthiopentenyl-1-phosphate (HK-MTPenyl-1-P), which is then dephosphorylated to form the acireductone 1,2-dihydroxy-3-keto-5-methylthiopentene (DHK-MTPene). The protein is Enolase-phosphatase E1 of Gluconacetobacter diazotrophicus (strain ATCC 49037 / DSM 5601 / CCUG 37298 / CIP 103539 / LMG 7603 / PAl5).